A 488-amino-acid chain; its full sequence is MSIRHCVAVDLGASSGRVMLASYQPGPRALTLREIHRFTNSLQKVDGFDCWDVDSLEGEIRRGLEKVCEQGILIDSIGIDTWGVDYVLLDKQGQRVGLPISYRDDRTQGLLRHAEAQLGRAEIYRRSGIQFLPFNTLYQLRALVEQQPELVSQAAHALLIPDYFSFRLTGNLNWEYTNATTTQLVNINSDSWDETLLNWTGAPLAWFGKPTHPGNVIGHWICPQGNRIPVVAVASHDTASAVIASPLADRHAAYLSSGTWSLMGFESLTPYTCDAALQANITNEGGAEGRYRVLKNIMGLWLLQRVLKEQNVSDLQGLIARTAALPACRFIIDCNDDRFINPASMSAEIQAACRDAGQPVPESDAELARCIFDSLALLYARVLNELAALRGHPFSQLHIVGGGCQNTLLNQLCADACGIVVVAGPIEASTLGNIGIQLMTLDELANVDEFRQVVRGNAALTTFTPNPDSEIARFVAQFQPQQTKELCA.

Ala-13–Arg-17 serves as a coordination point for ATP. The cysteines at positions 68 and 222 are disulfide-linked. Residues Gly-83 and His-236–Thr-238 contribute to the substrate site. The Proton acceptor role is filled by Asp-237. Thr-259 is an ATP binding site. Asn-296 contacts substrate. Gln-304 is a binding site for ATP. Cys-353 and Cys-370 form a disulfide bridge. Gly-402 is a binding site for ATP. A disulfide bridge links Cys-413 with Cys-417.

The protein belongs to the rhamnulokinase family. Mg(2+) serves as cofactor.

It catalyses the reaction L-rhamnulose + ATP = L-rhamnulose 1-phosphate + ADP + H(+). It participates in carbohydrate degradation; L-rhamnose degradation; glycerone phosphate from L-rhamnose: step 2/3. Its function is as follows. Involved in the catabolism of L-rhamnose (6-deoxy-L-mannose). Catalyzes the transfer of the gamma-phosphate group from ATP to the 1-hydroxyl group of L-rhamnulose to yield L-rhamnulose 1-phosphate. This is Rhamnulokinase from Klebsiella pneumoniae subsp. pneumoniae (strain ATCC 700721 / MGH 78578).